A 518-amino-acid chain; its full sequence is Glutamate--cysteine ligase (518 aa).

This sequence belongs to the glutamate--cysteine ligase type 1 family. Type 1 subfamily.

It carries out the reaction L-cysteine + L-glutamate + ATP = gamma-L-glutamyl-L-cysteine + ADP + phosphate + H(+). It participates in sulfur metabolism; glutathione biosynthesis; glutathione from L-cysteine and L-glutamate: step 1/2. This is Glutamate--cysteine ligase from Salmonella gallinarum (strain 287/91 / NCTC 13346).